Here is a 1073-residue protein sequence, read N- to C-terminus: Semaphorin-6D (1073 aa).

The signal sequence occupies residues 1–20; it reads MGFLLLWFCVLFLLVSRLRA. At 21–662 the chain is on the extracellular side; sequence VSFPEDDEPL…GESNQMVHMN (642 aa). Residues 27–512 form the Sema domain; the sequence is DEPLNTVDYH…FSSCVVRIPL (486 aa). A glycan (N-linked (GlcNAc...) asparagine) is linked at Asn51. 4 disulfides stabilise this stretch: Cys108–Cys118, Cys136–Cys145, Cys259–Cys370, and Cys284–Cys329. A glycan (N-linked (GlcNAc...) asparagine) is linked at Asn283. N-linked (GlcNAc...) asparagine glycosylation is found at Asn435 and Asn461. 4 disulfide bridges follow: Cys477–Cys506, Cys515–Cys533, Cys521–Cys568, and Cys525–Cys541. In terms of domain architecture, PSI spans 514–569; that stretch reads RCERYGSCKKSCIASRDPYCGWLSQGVCERVTLGMLPGGYEQDTEYGNTAHLGDCH. A glycan (N-linked (GlcNAc...) asparagine) is linked at Asn631. Residues 663 to 683 traverse the membrane as a helical segment; sequence VLITCVFAAFVLGAFIAGVAV. Residues 684-1073 lie on the Cytoplasmic side of the membrane; it reads YCYRDMFVRK…SVRPLNKYTY (390 aa). 3 positions are modified to phosphoserine: Ser723, Ser734, and Ser744. Disordered regions lie at residues 745-825, 839-876, 919-986, and 1021-1073; these read RKEL…GHIP, TSFSNSNAHKAEKKLQSMDHPLTKSSSKREHRRSVDSR, PPKV…SPNG, and LQPS…KYTY. Residue Thr773 is modified to Phosphothreonine. Positions 790 to 806 are enriched in basic and acidic residues; that stretch reads SHSEKAHSHGASRKEHP. Residues Ser931, Ser957, and Ser983 each carry the phosphoserine modification. Polar residues predominate over residues 931–942; it reads SPPSTLPRNSPT. Polar residues-rich tracts occupy residues 1021-1037 and 1059-1073; these read LQPSLSRQSSYTSNGTL and VPQTTSVRPLNKYTY.

It belongs to the semaphorin family. As to expression, expressed in brain and lung.

The protein localises to the cell membrane. Shows growth cone collapsing activity on dorsal root ganglion (DRG) neurons in vitro. May be a stop signal for the DRG neurons in their target areas, and possibly also for other neurons. May also be involved in the maintenance and remodeling of neuronal connections. Ligand of TREM2 with PLXNA1 as coreceptor in dendritic cells, plays a role in the generation of immune responses and skeletal homeostasis. This chain is Semaphorin-6D (Sema6d), found in Mus musculus (Mouse).